The primary structure comprises 453 residues: Na(+)/H(+) antiporter NhaA (453 aa).

11 consecutive transmembrane segments (helical) span residues 27–47, 78–98, 114–134, 143–163, 172–192, 201–221, 222–242, 316–336, 346–366, 385–405, and 421–441; these read FLHIEALSGIVLLLAAASALI, LHFWVNDALMTIFFLVAGMEI, ILPIVAAIGGVCVPAIIYFIF, GWAVPTATDIAFALGILALLG, IILLSLAIIDDIIAVLIIAFF, GLLIAGGGIALVLFFQWIGLA, SAWLYILPGAIIWWGLMVTGV, PWVAYGIMPVFAFANAGVSFA, FLIVFGVVIGLFVGKPLGIIT, WAGILLIGFLAGIGFTMSIFV, and IGVLCGSGLSALIGLGYGFIY.

This sequence belongs to the NhaA Na(+)/H(+) (TC 2.A.33) antiporter family.

It is found in the cell inner membrane. The catalysed reaction is Na(+)(in) + 2 H(+)(out) = Na(+)(out) + 2 H(+)(in). In terms of biological role, na(+)/H(+) antiporter that extrudes sodium in exchange for external protons. This is Na(+)/H(+) antiporter NhaA from Bartonella tribocorum (strain CIP 105476 / IBS 506).